We begin with the raw amino-acid sequence, 354 residues long: Carbamoyl phosphate synthase small chain (354 aa).

The CPSase stretch occupies residues 1 to 167; it reads MEAVLILEDG…KEPKIHKTAN (167 aa). L-glutamine is bound by residues Ser-45, Gly-219, and Gly-221. Residues 171–354 enclose the Glutamine amidotransferase type-1 domain; the sequence is RCVLIDCGVK…DEMIKLKDRK (184 aa). Cys-246 acts as the Nucleophile in catalysis. 5 residues coordinate L-glutamine: Leu-247, Gln-250, Asn-288, Gly-290, and Phe-291. Residues His-330 and Glu-332 contribute to the active site.

It belongs to the CarA family. As to quaternary structure, composed of two chains; the small (or glutamine) chain promotes the hydrolysis of glutamine to ammonia, which is used by the large (or ammonia) chain to synthesize carbamoyl phosphate. Tetramer of heterodimers (alpha,beta)4.

The enzyme catalyses hydrogencarbonate + L-glutamine + 2 ATP + H2O = carbamoyl phosphate + L-glutamate + 2 ADP + phosphate + 2 H(+). It carries out the reaction L-glutamine + H2O = L-glutamate + NH4(+). It functions in the pathway amino-acid biosynthesis; L-arginine biosynthesis; carbamoyl phosphate from bicarbonate: step 1/1. The protein operates within pyrimidine metabolism; UMP biosynthesis via de novo pathway; (S)-dihydroorotate from bicarbonate: step 1/3. Small subunit of the glutamine-dependent carbamoyl phosphate synthetase (CPSase). CPSase catalyzes the formation of carbamoyl phosphate from the ammonia moiety of glutamine, carbonate, and phosphate donated by ATP, constituting the first step of 2 biosynthetic pathways, one leading to arginine and/or urea and the other to pyrimidine nucleotides. The small subunit (glutamine amidotransferase) binds and cleaves glutamine to supply the large subunit with the substrate ammonia. The sequence is that of Carbamoyl phosphate synthase small chain from Methanocaldococcus jannaschii (strain ATCC 43067 / DSM 2661 / JAL-1 / JCM 10045 / NBRC 100440) (Methanococcus jannaschii).